A 295-amino-acid chain; its full sequence is sn-glycerol-3-phosphate transport system permease protein UgpA (295 aa).

The Cytoplasmic segment spans residues 1 to 11; it reads MSSSRPVFRSR. The helical transmembrane segment at 12 to 32 threads the bilayer; sequence WLPYLLVAPQLIITVIFFIWP. Topologically, residues 33-80 are periplasmic; sequence AGEALWYSLQSVDPFGFSSQFVGLDNFVTLFHDSYYLDAFWTTIKFST. An ABC transmembrane type-1 domain is found at 76–284; the sequence is IKFSTFVTVS…FLVIVLTVVQ (209 aa). Residues 81-101 traverse the membrane as a helical segment; sequence FVTVSGLLVSLFFAALVEYIV. The Cytoplasmic segment spans residues 102–109; that stretch reads RGSRFYQT. A helical membrane pass occupies residues 110–130; the sequence is LMLLPYAVAPAVAAVLWIFLF. Residues 131–156 lie on the Periplasmic side of the membrane; the sequence is NPGRGLITHFLAEFGYDWNHAQNSGQ. Residues 157 to 177 form a helical membrane-spanning segment; sequence AMFLVVFASVWKQISYNFLFF. Topologically, residues 178-207 are cytoplasmic; the sequence is YAALQSIPRSLIEAAAIDGAGPIRRFFKIA. A helical transmembrane segment spans residues 208–228; sequence LPLIAPVSFFLLVVNLVYAFF. Over 229-262 the chain is Periplasmic; the sequence is DTFPVIDAATSGGPVQATTTLIYKIYREGFTGLD. A helical transmembrane segment spans residues 263–283; it reads LASSAAQSVVLMFLVIVLTVV. Over 284–295 the chain is Cytoplasmic; sequence QFRYVESKVRYQ.

Belongs to the binding-protein-dependent transport system permease family. UgpAE subfamily. In terms of assembly, the complex is composed of two ATP-binding proteins (UgpC), two transmembrane proteins (UgpA and UgpE) and a solute-binding protein (UgpB).

The protein resides in the cell inner membrane. In terms of biological role, part of the ABC transporter complex UgpBAEC involved in sn-glycerol-3-phosphate (G3P) import. Probably responsible for the translocation of the substrate across the membrane. In Escherichia coli (strain UTI89 / UPEC), this protein is sn-glycerol-3-phosphate transport system permease protein UgpA (ugpA).